The following is a 243-amino-acid chain: MALLPVLFLVTVLLPSLPAEGKDPAFTALLTTQLQVQREIVNKHNELRKAVSPPASNMLKMEWSREVTTNAQRWANKCTLQHSDPEDRKTSTRCGENLYMSSDPTSWSSAIQSWYDEILDFVYGVGPKSPNAVVGHYTQLVWYSTYQVGCGIAYCPNQDSLKYYYVCQYCPAGNNMNRKNTPYQQGTPCAGCPDDCDKGLCTNSCQYQDLLSNCDSLKNTAGCEHELLKEKCKATCLCENKIY.

An N-terminal signal peptide occupies residues 1 to 21; it reads MALLPVLFLVTVLLPSLPAEG. The SCP domain maps to 41–169; it reads VNKHNELRKA…SLKYYYVCQY (129 aa). Disulfide bonds link C189–C196, C192–C201, C205–C238, C214–C232, and C223–C236. The region spanning 205–238 is the ShKT domain; it reads CQYQDLLSNCDSLKNTAGCEHELLKEKCKATCLC.

It belongs to the CRISP family. As to quaternary structure, interacts with NSUN4 isoform 3. Testis and epididymis.

Its subcellular location is the secreted. In terms of biological role, may regulate some ion channels' activity and thereby regulate calcium fluxes during sperm capacitation. The protein is Cysteine-rich secretory protein 2 (CRISP2) of Homo sapiens (Human).